Reading from the N-terminus, the 336-residue chain is UPF0284 protein Pcal_1534 (336 aa).

This sequence belongs to the UPF0284 family.

The protein is UPF0284 protein Pcal_1534 of Pyrobaculum calidifontis (strain DSM 21063 / JCM 11548 / VA1).